Reading from the N-terminus, the 289-residue chain is Acetyl-coenzyme A carboxylase carboxyl transferase subunit beta (289 aa).

The CoA carboxyltransferase N-terminal domain occupies 28–289 (VMTKCPKCKK…QGGEMAVWQS (262 aa)). Cysteine 32, cysteine 35, cysteine 51, and cysteine 54 together coordinate Zn(2+). The C4-type zinc-finger motif lies at 32–54 (CPKCKKIMYTKELLKNLKVCVNC).

The protein belongs to the AccD/PCCB family. In terms of assembly, acetyl-CoA carboxylase is a heterohexamer composed of biotin carboxyl carrier protein (AccB), biotin carboxylase (AccC) and two subunits each of ACCase subunit alpha (AccA) and ACCase subunit beta (AccD). Requires Zn(2+) as cofactor.

It localises to the cytoplasm. The enzyme catalyses N(6)-carboxybiotinyl-L-lysyl-[protein] + acetyl-CoA = N(6)-biotinyl-L-lysyl-[protein] + malonyl-CoA. Its pathway is lipid metabolism; malonyl-CoA biosynthesis; malonyl-CoA from acetyl-CoA: step 1/1. Its function is as follows. Component of the acetyl coenzyme A carboxylase (ACC) complex. Biotin carboxylase (BC) catalyzes the carboxylation of biotin on its carrier protein (BCCP) and then the CO(2) group is transferred by the transcarboxylase to acetyl-CoA to form malonyl-CoA. This Bacillus cereus (strain AH187) protein is Acetyl-coenzyme A carboxylase carboxyl transferase subunit beta.